The chain runs to 387 residues: Phosphoglycerate kinase (387 aa).

Substrate is bound by residues 21 to 23 (DLN), arginine 36, 59 to 62 (HLGR), arginine 113, and arginine 146. Residues lysine 197, glutamate 314, and 340-343 (GGDT) contribute to the ATP site.

The protein belongs to the phosphoglycerate kinase family. Monomer.

The protein resides in the cytoplasm. It carries out the reaction (2R)-3-phosphoglycerate + ATP = (2R)-3-phospho-glyceroyl phosphate + ADP. It participates in carbohydrate degradation; glycolysis; pyruvate from D-glyceraldehyde 3-phosphate: step 2/5. This chain is Phosphoglycerate kinase, found in Pseudomonas putida (strain ATCC 47054 / DSM 6125 / CFBP 8728 / NCIMB 11950 / KT2440).